The following is a 102-amino-acid chain: Small ribosomal subunit protein bS6 (102 aa).

This sequence belongs to the bacterial ribosomal protein bS6 family.

In terms of biological role, binds together with bS18 to 16S ribosomal RNA. This chain is Small ribosomal subunit protein bS6, found in Deinococcus geothermalis (strain DSM 11300 / CIP 105573 / AG-3a).